A 103-amino-acid chain; its full sequence is NADH-quinone oxidoreductase subunit K (103 aa).

The next 3 helical transmembrane spans lie at Ile6–Leu26, Leu30–Ala50, and Phe66–Phe86.

This sequence belongs to the complex I subunit 4L family. NDH-1 is composed of 14 different subunits. Subunits NuoA, H, J, K, L, M, N constitute the membrane sector of the complex.

The protein resides in the cell inner membrane. The enzyme catalyses a quinone + NADH + 5 H(+)(in) = a quinol + NAD(+) + 4 H(+)(out). Its function is as follows. NDH-1 shuttles electrons from NADH, via FMN and iron-sulfur (Fe-S) centers, to quinones in the respiratory chain. The immediate electron acceptor for the enzyme in this species is believed to be ubiquinone. Couples the redox reaction to proton translocation (for every two electrons transferred, four hydrogen ions are translocated across the cytoplasmic membrane), and thus conserves the redox energy in a proton gradient. The chain is NADH-quinone oxidoreductase subunit K from Sorangium cellulosum (strain So ce56) (Polyangium cellulosum (strain So ce56)).